Here is a 150-residue protein sequence, read N- to C-terminus: MLGAALRRCAVAATARAGPRGLLHSAPTPGPAAAIQSVRCYSHGSSETDEEFDARWVTYFNKPDIDAWELRKGINTLVTYDLVPEPKIIDAALRACRRLNDFASTVRILEAVKDKAGPHKEIYPYVIQELRPTLNELGISTPEELGLDKV.

The N-terminal 41 residues, 1–41 (MLGAALRRCAVAATARAGPRGLLHSAPTPGPAAAIQSVRCY), are a transit peptide targeting the mitochondrion. The SIFI-degron motif lies at 2–17 (LGAALRRCAVAATARA). N6-acetyllysine is present on residues lysine 87 and lysine 113. Threonine 141 bears the Phosphothreonine mark.

This sequence belongs to the cytochrome c oxidase subunit 5A family. As to quaternary structure, component of the cytochrome c oxidase (complex IV, CIV), a multisubunit enzyme composed of 14 subunits. The complex is composed of a catalytic core of 3 subunits MT-CO1, MT-CO2 and MT-CO3, encoded in the mitochondrial DNA, and 11 supernumerary subunits COX4I, COX5A, COX5B, COX6A, COX6B, COX6C, COX7A, COX7B, COX7C, COX8 and NDUFA4, which are encoded in the nuclear genome. The complex exists as a monomer or a dimer and forms supercomplexes (SCs) in the inner mitochondrial membrane with NADH-ubiquinone oxidoreductase (complex I, CI) and ubiquinol-cytochrome c oxidoreductase (cytochrome b-c1 complex, complex III, CIII), resulting in different assemblies (supercomplex SCI(1)III(2)IV(1) and megacomplex MCI(2)III(2)IV(2)). Interacts with AFG1L. Interacts with RAB5IF. In terms of processing, in response to mitochondrial stress, the precursor protein is ubiquitinated by the SIFI complex in the cytoplasm before mitochondrial import, leading to its degradation. Within the SIFI complex, UBR4 initiates ubiquitin chain that are further elongated or branched by KCMF1.

It localises to the mitochondrion inner membrane. Its pathway is energy metabolism; oxidative phosphorylation. Its function is as follows. Component of the cytochrome c oxidase, the last enzyme in the mitochondrial electron transport chain which drives oxidative phosphorylation. The respiratory chain contains 3 multisubunit complexes succinate dehydrogenase (complex II, CII), ubiquinol-cytochrome c oxidoreductase (cytochrome b-c1 complex, complex III, CIII) and cytochrome c oxidase (complex IV, CIV), that cooperate to transfer electrons derived from NADH and succinate to molecular oxygen, creating an electrochemical gradient over the inner membrane that drives transmembrane transport and the ATP synthase. Cytochrome c oxidase is the component of the respiratory chain that catalyzes the reduction of oxygen to water. Electrons originating from reduced cytochrome c in the intermembrane space (IMS) are transferred via the dinuclear copper A center (CU(A)) of subunit 2 and heme A of subunit 1 to the active site in subunit 1, a binuclear center (BNC) formed by heme A3 and copper B (CU(B)). The BNC reduces molecular oxygen to 2 water molecules using 4 electrons from cytochrome c in the IMS and 4 protons from the mitochondrial matrix. In Cebuella pygmaea (Pygmy marmoset), this protein is Cytochrome c oxidase subunit 5A, mitochondrial (COX5A).